Reading from the N-terminus, the 115-residue chain is Putative membrane protein insertion efficiency factor (115 aa).

It belongs to the UPF0161 family.

Its subcellular location is the cell membrane. Could be involved in insertion of integral membrane proteins into the membrane. This Mycolicibacterium paratuberculosis (strain ATCC BAA-968 / K-10) (Mycobacterium paratuberculosis) protein is Putative membrane protein insertion efficiency factor.